We begin with the raw amino-acid sequence, 293 residues long: Urease accessory protein UreD (293 aa).

The tract at residues 1-22 (MAVAQQAWSPGADPAPSAAPVS) is disordered. Over residues 7 to 22 (AWSPGADPAPSAAPVS) the composition is skewed to low complexity.

It belongs to the UreD family. In terms of assembly, ureD, UreF and UreG form a complex that acts as a GTP-hydrolysis-dependent molecular chaperone, activating the urease apoprotein by helping to assemble the nickel containing metallocenter of UreC. The UreE protein probably delivers the nickel.

It is found in the cytoplasm. Its function is as follows. Required for maturation of urease via the functional incorporation of the urease nickel metallocenter. In Alkalilimnicola ehrlichii (strain ATCC BAA-1101 / DSM 17681 / MLHE-1), this protein is Urease accessory protein UreD.